A 95-amino-acid polypeptide reads, in one-letter code: Aspartyl/glutamyl-tRNA(Asn/Gln) amidotransferase subunit C (95 aa).

It belongs to the GatC family. Heterotrimer of A, B and C subunits.

It catalyses the reaction L-glutamyl-tRNA(Gln) + L-glutamine + ATP + H2O = L-glutaminyl-tRNA(Gln) + L-glutamate + ADP + phosphate + H(+). The catalysed reaction is L-aspartyl-tRNA(Asn) + L-glutamine + ATP + H2O = L-asparaginyl-tRNA(Asn) + L-glutamate + ADP + phosphate + 2 H(+). Functionally, allows the formation of correctly charged Asn-tRNA(Asn) or Gln-tRNA(Gln) through the transamidation of misacylated Asp-tRNA(Asn) or Glu-tRNA(Gln) in organisms which lack either or both of asparaginyl-tRNA or glutaminyl-tRNA synthetases. The reaction takes place in the presence of glutamine and ATP through an activated phospho-Asp-tRNA(Asn) or phospho-Glu-tRNA(Gln). This Chlorobium phaeobacteroides (strain DSM 266 / SMG 266 / 2430) protein is Aspartyl/glutamyl-tRNA(Asn/Gln) amidotransferase subunit C.